A 308-amino-acid polypeptide reads, in one-letter code: Transmembrane and ubiquitin-like domain-containing protein 1 (308 aa).

Residues 11–31 form a helical membrane-spanning segment; that stretch reads VTVLFALVLFFMVLMLAWVST. Residues 39-162 are disordered; the sequence is THWIRPEPAQ…GLGDGTTAQS (124 aa). Residues 63-93 show a composition bias toward polar residues; sequence PSQTLTNADPNSETVDSSDSTQSSREFQNAG. Residues 103-115 are compositionally biased toward low complexity; sequence SSSGSTVSTGGSV. Residues 132–149 show a composition bias toward polar residues; it reads PNFTVSSRDPQAGASSSL. One can recognise a Ubiquitin-like domain in the interval 169–242; it reads IHLRLKFLND…LHCHISQHAS (74 aa). 2 helical membrane-spanning segments follow: residues 253 to 273 and 283 to 303; these read VPLN…MLLW and FTGT…AIAF.

The protein resides in the membrane. It localises to the cytoplasm. Its subcellular location is the nucleus. Functionally, may contribute to the regulation of translation during cell-cycle progression. May contribute to the regulation of cell proliferation. The membrane form is involved in sterol-regulated ubiquitination and degradation of HMG-CoA reductase HMGCR. May be involved in centrosome assembly. This is Transmembrane and ubiquitin-like domain-containing protein 1 (tmub1) from Xenopus laevis (African clawed frog).